The sequence spans 67 residues: GRLFKITACVPSQTRIRTQRELQNTYFTKLVPYENWFREQQRIQKMGGKIVKVELATGKQGINTGLA.

Positions 1–56 constitute a CpcD-like domain; the sequence is GRLFKITACVPSQTRIRTQRELQNTYFTKLVPYENWFREQQRIQKMGGKIVKVELA.

Belongs to the phycobilisome linker protein family.

It localises to the cellular thylakoid membrane. Functionally, rod linker protein, associated with allophycocyanin. Linker polypeptides determine the state of aggregation and the location of the disk-shaped phycobiliprotein units within the phycobilisome and modulate their spectroscopic properties in order to mediate a directed and optimal energy transfer. The polypeptide is Phycobilisome 7.8 kDa linker polypeptide, allophycocyanin-associated, core (apcC) (Mastigocladus laminosus (Fischerella sp.)).